We begin with the raw amino-acid sequence, 295 residues long: Cytidine deaminase (295 aa).

CMP/dCMP-type deaminase domains lie at 48–168 and 187–295; these read TDSE…FGPA and KETD…YVAA. A substrate-binding site is contributed by 89–91; that stretch reads NME. Position 102 (H102) interacts with Zn(2+). The active-site Proton donor is the E104. The Zn(2+) site is built by C129 and C132.

This sequence belongs to the cytidine and deoxycytidylate deaminase family. In terms of assembly, homodimer. It depends on Zn(2+) as a cofactor.

It catalyses the reaction cytidine + H2O + H(+) = uridine + NH4(+). It carries out the reaction 2'-deoxycytidine + H2O + H(+) = 2'-deoxyuridine + NH4(+). This enzyme scavenges exogenous and endogenous cytidine and 2'-deoxycytidine for UMP synthesis. This Photobacterium profundum (strain SS9) protein is Cytidine deaminase.